The chain runs to 1221 residues: DNA replication helicase (1221 aa).

The Nuclear localization signal signature appears at 692–701 (PKCKCYKKIK). 917 to 924 (GEPGSGKS) is a binding site for ATP. The H-T-H motif DNA-binding region spans 967–981 (INELKQCSESYFKKH).

Interacts with IE1 and LEF-3.

The protein localises to the host nucleus. The enzyme catalyses ATP + H2O = ADP + phosphate + H(+). In terms of biological role, essential for initiation of viral DNA replication, it may contribute to other functions such as controlling the switch to the late phase and leading to the inhibition of host protein synthesis. Required for late and very late gene expression. This Lepidoptera (butterflies and moths) protein is DNA replication helicase (HELI).